A 1647-amino-acid polypeptide reads, in one-letter code: Transcription elongation factor SPT6 homolog (1647 aa).

The segment at 1-209 (MARNAISDDE…SKKKKYRQGS (209 aa)) is disordered. Over residues 7–20 (SDDEEDHELEDDDG) the composition is skewed to acidic residues. A compositionally biased stretch (basic and acidic residues) spans 21–30 (EPVHGDPAEH). A compositionally biased stretch (acidic residues) spans 31–67 (DENDDEEDDDDVGNEYENDGFIVNDEDEEEEEEEDEE). A compositionally biased stretch (basic residues) spans 103-114 (KFKKRQYKRLKK). Residues 132 to 151 (DSRGGTRRSAEDKIKDRLFD) show a composition bias toward basic and acidic residues. A compositionally biased stretch (acidic residues) spans 152 to 191 (DVDVDDPPDDVGDEEDLVVEEDVVGSEDEMADFIVDEDDE). The region spanning 1103–1174 (GRIVQASVRR…QRYQVFLICK (72 aa)) is the S1 motif domain. The segment at 1429–1647 (PMRSPADHGS…RKSDGGGGGW (219 aa)) is disordered. 2 consecutive repeat copies span residues 1443-1444 (GW) and 1452-1453 (GW). The 12 X 2 AA repeats of [WG]-[GW] repeats stretch occupies residues 1443–1647 (GWGSSQSEGG…RKSDGGGGGW (205 aa)). Residues 1462 to 1471 (SGRGGEYRNG) show a composition bias toward gly residues. Residues 1496–1507 (RRDDMNSDRQDG) are compositionally biased toward basic and acidic residues. 6 consecutive repeat copies span residues 1511-1512 (WG), 1522-1523 (GW), 1530-1531 (GW), 1547-1548 (GW), 1563-1564 (WG), and 1574-1575 (GW). 4 stretches are compositionally biased toward gly residues: residues 1519-1532 (ADGGWGNSGGGGWG), 1539-1552 (KTGGGSTGGWGSES), 1561-1579 (GSWGSGSGGGGSGGWGNDS), and 1588-1600 (GGFGSGSGGGGSD). 4 tandem repeats follow at residues 1601–1602 (WG), 1615–1616 (GW), 1630–1631 (GW), and 1646–1647 (GW).

This sequence belongs to the SPT6 family. As to quaternary structure, interacts (via N-terminus) with IWS1. In terms of tissue distribution, expressed in shoot apical meristem, leaf primordia, vasculature of young leaves, inflorescence meristem, floral meristem, young floral organs, developing ovules and anthers.

Its subcellular location is the nucleus. Transcription elongation factor that enhances the transcription elongation by RNA polymerase II (RNAPII). Plays an important role in regulating embryo apical and basal patterning during early embryogenesis, partly through negative regulation of the transcription factors PHABULOSA and PHAVOLUTA. This chain is Transcription elongation factor SPT6 homolog, found in Arabidopsis thaliana (Mouse-ear cress).